We begin with the raw amino-acid sequence, 900 residues long: MQLHILNNPKDAALAADAEFLKQSLFNLLHEEASPLVVETVKLLSTSDDSAALIEKVLPQLDEQQTHDLTLACGLFAQILNIAEDVHHERRRQIHEEAGRGGAEGSLTETVRRLKAGKADGKSVQRQLDNTSVTAVLTAHPTEVQRQTVLSFNRRIRALLPQRERCTNADALARLRREIDTILLGLWQTSETRRHKLSVNDEINNGVSIFPMSFFEALPKLYRNMEHDFQMVYPDVCVPNILKIGGWIGGDRDGNPFVSAETLRFAFRRHADAVFRFYRGELDKLYRELPLSIRRVKVNDDVMALAALSPDEELARTEEPYRRAIAYIMARAMGKARALGLGMGCKFGFLEPYASAQEFLDDLKKLQRSLIDNGSRLLAEGRLADLIRSVSVFGFHMMPLDLRQHAGKHADVVAELFQHAGLEDYNSLNEEQKQAVLLRELSHQRPLYSPFITYSDHTRHELAIFNEARKIKDEFGEDAVTQSIISNCEQPSDLLALALLLKESGLLAVENGKPHSRINIVPLFETIEALENACPVMETMFRLDWYDALLESRGNIQEIMLGYSDSNKDGGYVTSSWCLYQAELGLVELFKKYDVRMRLFHGRGGSVGRGGGPSYQAILAQPAGSVAGQIRITEQGEVITAKYADPGNAQRNLETLVAATLEASILPDKKDPDAKLMQALSDVSFKYYRELITHPDFIDYFLQTSPIQEIATLNLGSRPASRKTLARIQDLRAIPWVFSWMQNRLMLPAWYGFGSAVETLCEGNPDTLTALREHAQSNPFFQAMLSNMEQVMAKTDITLAENYAGLSESPDKAKIIFGMIKEEYRRSRKALLDLLQTEELLRDNRSLARSLALRIPYLNALNGLQVAMLKRLRKEPDNPHALLMVHLTINGVAQGLRNTG.

Active-site residues include His140 and Lys568.

This sequence belongs to the PEPCase type 1 family. The cofactor is Mg(2+).

It carries out the reaction oxaloacetate + phosphate = phosphoenolpyruvate + hydrogencarbonate. Forms oxaloacetate, a four-carbon dicarboxylic acid source for the tricarboxylic acid cycle. The protein is Phosphoenolpyruvate carboxylase of Neisseria meningitidis serogroup C / serotype 2a (strain ATCC 700532 / DSM 15464 / FAM18).